The following is an 887-amino-acid chain: Bifunctional uridylyltransferase/uridylyl-removing enzyme (887 aa).

The interval 1-337 (MINTSPLLNY…RLPNYERKIE (337 aa)) is uridylyltransferase. A uridylyl-removing region spans residues 339–699 (VNDHFKIVDN…AHRKAAQDAV (361 aa)). The HD domain occupies 457–579 (VDAHTLLLLR…LGDMEHLDYL (123 aa)). ACT domains are found at residues 700-782 (QIFI…LMQR) and 809-887 (MVEI…ICQH).

This sequence belongs to the GlnD family. Requires Mg(2+) as cofactor.

The catalysed reaction is [protein-PII]-L-tyrosine + UTP = [protein-PII]-uridylyl-L-tyrosine + diphosphate. It carries out the reaction [protein-PII]-uridylyl-L-tyrosine + H2O = [protein-PII]-L-tyrosine + UMP + H(+). Its activity is regulated as follows. Uridylyltransferase (UTase) activity is inhibited by glutamine, while glutamine activates uridylyl-removing (UR) activity. In terms of biological role, modifies, by uridylylation and deuridylylation, the PII regulatory proteins (GlnB and homologs), in response to the nitrogen status of the cell that GlnD senses through the glutamine level. Under low glutamine levels, catalyzes the conversion of the PII proteins and UTP to PII-UMP and PPi, while under higher glutamine levels, GlnD hydrolyzes PII-UMP to PII and UMP (deuridylylation). Thus, controls uridylylation state and activity of the PII proteins, and plays an important role in the regulation of nitrogen assimilation and metabolism. The sequence is that of Bifunctional uridylyltransferase/uridylyl-removing enzyme from Acinetobacter baumannii (strain AB307-0294).